A 372-amino-acid polypeptide reads, in one-letter code: Cytochrome b (372 aa).

Transmembrane regions (helical) follow at residues 25-45, 69-90, 105-125, and 170-190; these read FGSMLLTCLALQTMTGFFLAI, WMMQNLHAIGASMFFICIYIHI, WLSGTTLLIILMATAFFGYVL, and FFALHFILPFTIISMSSIHIM. Positions 75 and 89 each coordinate heme b. Heme b is bound by residues H174 and H188. H193 contacts a ubiquinone. Transmembrane regions (helical) follow at residues 218-238, 280-300, 312-332, and 339-358; these read HKDMLMLTIMMTALFIIMSFM, LGGTVALVLSVTILMTMPFTH, LMQFMFWTLVATFITITWAAT, and FTTIGQATAILYFTFFIMNP.

Belongs to the cytochrome b family. The cytochrome bc1 complex contains 3 respiratory subunits (MT-CYB, CYC1 and UQCRFS1), 2 core proteins (UQCRC1 and UQCRC2) and probably 6 low-molecular weight proteins. Requires heme b as cofactor.

The protein resides in the mitochondrion inner membrane. Functionally, component of the ubiquinol-cytochrome c reductase complex (complex III or cytochrome b-c1 complex) that is part of the mitochondrial respiratory chain. The b-c1 complex mediates electron transfer from ubiquinol to cytochrome c. Contributes to the generation of a proton gradient across the mitochondrial membrane that is then used for ATP synthesis. The polypeptide is Cytochrome b (MT-CYB) (Pantherophis obsoletus (Black ratsnake)).